The sequence spans 320 residues: Cytochrome f (320 aa).

The signal sequence occupies residues 1–35; sequence MQNRNTFLGVKEQITRSIFVSIMIYVITRASISNA. Residues Tyr36, Cys56, Cys59, and His60 each contribute to the heme site. The chain crosses the membrane as a helical span at residues 286-306; the sequence is IQGLLFFLASVILAQIFLVLK.

It belongs to the cytochrome f family. The 4 large subunits of the cytochrome b6-f complex are cytochrome b6, subunit IV (17 kDa polypeptide, petD), cytochrome f and the Rieske protein, while the 4 small subunits are PetG, PetL, PetM and PetN. The complex functions as a dimer. It depends on heme as a cofactor.

The protein localises to the plastid. Its subcellular location is the chloroplast thylakoid membrane. Its function is as follows. Component of the cytochrome b6-f complex, which mediates electron transfer between photosystem II (PSII) and photosystem I (PSI), cyclic electron flow around PSI, and state transitions. The protein is Cytochrome f of Dioscorea elephantipes (Elephant's foot yam).